An 81-amino-acid polypeptide reads, in one-letter code: Exodeoxyribonuclease 7 small subunit (81 aa).

Belongs to the XseB family. In terms of assembly, heterooligomer composed of large and small subunits.

It localises to the cytoplasm. The enzyme catalyses Exonucleolytic cleavage in either 5'- to 3'- or 3'- to 5'-direction to yield nucleoside 5'-phosphates.. Bidirectionally degrades single-stranded DNA into large acid-insoluble oligonucleotides, which are then degraded further into small acid-soluble oligonucleotides. This chain is Exodeoxyribonuclease 7 small subunit, found in Pasteurella multocida (strain Pm70).